Consider the following 179-residue polypeptide: Large ribosomal subunit protein uL5 (179 aa).

Belongs to the universal ribosomal protein uL5 family. As to quaternary structure, part of the 50S ribosomal subunit; part of the 5S rRNA/L5/L18/L25 subcomplex. Contacts the 5S rRNA and the P site tRNA. Forms a bridge to the 30S subunit in the 70S ribosome.

In terms of biological role, this is one of the proteins that bind and probably mediate the attachment of the 5S RNA into the large ribosomal subunit, where it forms part of the central protuberance. In the 70S ribosome it contacts protein S13 of the 30S subunit (bridge B1b), connecting the 2 subunits; this bridge is implicated in subunit movement. Contacts the P site tRNA; the 5S rRNA and some of its associated proteins might help stabilize positioning of ribosome-bound tRNAs. The polypeptide is Large ribosomal subunit protein uL5 (Herminiimonas arsenicoxydans).